The primary structure comprises 353 residues: Photosystem II D2 protein (353 aa).

Residue Thr2 is modified to N-acetylthreonine. Residue Thr2 is modified to Phosphothreonine. Residues 41–61 (CAYFALGGWFTGTTFVTSWYT) traverse the membrane as a helical segment. His118 is a chlorophyll a binding site. The helical transmembrane segment at 125–141 (GFMLRQFELARSVQLRP) threads the bilayer. Pheophytin a-binding residues include Gln130 and Asn143. A helical membrane pass occupies residues 153-166 (VFVSVFLIYPLGQS). Residue His198 coordinates chlorophyll a. Residues 208–228 (AALLCAIHGATVENTLFEDGD) form a helical membrane-spanning segment. A plastoquinone contacts are provided by His215 and Phe262. A Fe cation-binding site is contributed by His215. A Fe cation-binding site is contributed by His269. Residues 279–295 (GLWMSALGVVGLALNLR) form a helical membrane-spanning segment.

The protein belongs to the reaction center PufL/M/PsbA/D family. PSII is composed of 1 copy each of membrane proteins PsbA, PsbB, PsbC, PsbD, PsbE, PsbF, PsbH, PsbI, PsbJ, PsbK, PsbL, PsbM, PsbT, PsbX, PsbY, PsbZ, Psb30/Ycf12, at least 3 peripheral proteins of the oxygen-evolving complex and a large number of cofactors. It forms dimeric complexes. It depends on The D1/D2 heterodimer binds P680, chlorophylls that are the primary electron donor of PSII, and subsequent electron acceptors. It shares a non-heme iron and each subunit binds pheophytin, quinone, additional chlorophylls, carotenoids and lipids. There is also a Cl(-1) ion associated with D1 and D2, which is required for oxygen evolution. The PSII complex binds additional chlorophylls, carotenoids and specific lipids. as a cofactor.

The protein resides in the plastid. It localises to the chloroplast thylakoid membrane. The enzyme catalyses 2 a plastoquinone + 4 hnu + 2 H2O = 2 a plastoquinol + O2. Its function is as follows. Photosystem II (PSII) is a light-driven water:plastoquinone oxidoreductase that uses light energy to abstract electrons from H(2)O, generating O(2) and a proton gradient subsequently used for ATP formation. It consists of a core antenna complex that captures photons, and an electron transfer chain that converts photonic excitation into a charge separation. The D1/D2 (PsbA/PsbD) reaction center heterodimer binds P680, the primary electron donor of PSII as well as several subsequent electron acceptors. D2 is needed for assembly of a stable PSII complex. This Populus deltoides (Eastern poplar) protein is Photosystem II D2 protein.